A 105-amino-acid chain; its full sequence is ATP synthase subunit c (105 aa).

3 helical membrane passes run 3–23 (FLALFFLALVGVAFAYDGGMD), 32–52 (SILGAMIGLGIAAFGGAIGMG), and 78–98 (VAMAMIEAQVIYTLVFAIIAI).

The protein belongs to the ATPase C chain family. As to quaternary structure, F-type ATPases have 2 components, F(1) - the catalytic core - and F(0) - the membrane proton channel. F(1) has five subunits: alpha(3), beta(3), gamma(1), delta(1), epsilon(1). F(0) has three main subunits: a(1), b(2) and c(10-14). The alpha and beta chains form an alternating ring which encloses part of the gamma chain. F(1) is attached to F(0) by a central stalk formed by the gamma and epsilon chains, while a peripheral stalk is formed by the delta and b chains.

It is found in the cell inner membrane. Functionally, f(1)F(0) ATP synthase produces ATP from ADP in the presence of a proton or sodium gradient. F-type ATPases consist of two structural domains, F(1) containing the extramembraneous catalytic core and F(0) containing the membrane proton channel, linked together by a central stalk and a peripheral stalk. During catalysis, ATP synthesis in the catalytic domain of F(1) is coupled via a rotary mechanism of the central stalk subunits to proton translocation. Its function is as follows. Key component of the F(0) channel; it plays a direct role in translocation across the membrane. A homomeric c-ring of between 10-14 subunits forms the central stalk rotor element with the F(1) delta and epsilon subunits. The protein is ATP synthase subunit c of Helicobacter acinonychis (strain Sheeba).